The primary structure comprises 309 residues: Peptide methionine sulfoxide reductase MsrA/MsrB (309 aa).

Positions 1–153 (MIYLAGGCFW…PNGYCHIDIN (153 aa)) are peptide methionine sulfoxide reductase A. Residue cysteine 8 is part of the active site. A MsrB domain is found at 170–293 (ATEIKEKLSA…NSLSITFIPK (124 aa)). Cysteine 282 (nucleophile) is an active-site residue.

The protein in the N-terminal section; belongs to the MsrA Met sulfoxide reductase family. In the C-terminal section; belongs to the MsrB Met sulfoxide reductase family.

It carries out the reaction L-methionyl-[protein] + [thioredoxin]-disulfide + H2O = L-methionyl-(S)-S-oxide-[protein] + [thioredoxin]-dithiol. The enzyme catalyses [thioredoxin]-disulfide + L-methionine + H2O = L-methionine (S)-S-oxide + [thioredoxin]-dithiol. The catalysed reaction is L-methionyl-[protein] + [thioredoxin]-disulfide + H2O = L-methionyl-(R)-S-oxide-[protein] + [thioredoxin]-dithiol. Functionally, has an important function as a repair enzyme for proteins that have been inactivated by oxidation. Catalyzes the reversible oxidation-reduction of methionine sulfoxide in proteins to methionine. This chain is Peptide methionine sulfoxide reductase MsrA/MsrB (msrAB), found in Streptococcus pyogenes serotype M1.